Here is a 210-residue protein sequence, read N- to C-terminus: uncharacterized protein (210 aa).

This is an uncharacterized protein from Sulfolobus islandicus filamentous virus (isolate Iceland/Hveragerdi) (SIFV).